The following is an 84-amino-acid chain: Sec-independent protein translocase protein TatA (84 aa).

Residues 1-21 (MGGLQPWHWLIVIAVFVLLFG) traverse the membrane as a helical segment. Positions 46 to 84 (MQSDSNAAKSDQPEQITSERVVVDPSTQSTSSNSDKRPA) are disordered. Polar residues predominate over residues 48-63 (SDSNAAKSDQPEQITS).

The protein belongs to the TatA/E family. The Tat system comprises two distinct complexes: a TatABC complex, containing multiple copies of TatA, TatB and TatC subunits, and a separate TatA complex, containing only TatA subunits. Substrates initially bind to the TatABC complex, which probably triggers association of the separate TatA complex to form the active translocon.

Its subcellular location is the cell membrane. Functionally, part of the twin-arginine translocation (Tat) system that transports large folded proteins containing a characteristic twin-arginine motif in their signal peptide across membranes. TatA could form the protein-conducting channel of the Tat system. In Mycolicibacterium gilvum (strain PYR-GCK) (Mycobacterium gilvum (strain PYR-GCK)), this protein is Sec-independent protein translocase protein TatA.